Reading from the N-terminus, the 410-residue chain is Arginine biosynthesis bifunctional protein ArgJ (410 aa).

Residues Thr-160, Lys-186, Thr-197, Glu-283, Asn-405, and Thr-410 each contribute to the substrate site. Thr-197 acts as the Nucleophile in catalysis.

This sequence belongs to the ArgJ family. Heterotetramer of two alpha and two beta chains.

It is found in the cytoplasm. It carries out the reaction N(2)-acetyl-L-ornithine + L-glutamate = N-acetyl-L-glutamate + L-ornithine. The catalysed reaction is L-glutamate + acetyl-CoA = N-acetyl-L-glutamate + CoA + H(+). It functions in the pathway amino-acid biosynthesis; L-arginine biosynthesis; L-ornithine and N-acetyl-L-glutamate from L-glutamate and N(2)-acetyl-L-ornithine (cyclic): step 1/1. Its pathway is amino-acid biosynthesis; L-arginine biosynthesis; N(2)-acetyl-L-ornithine from L-glutamate: step 1/4. Functionally, catalyzes two activities which are involved in the cyclic version of arginine biosynthesis: the synthesis of N-acetylglutamate from glutamate and acetyl-CoA as the acetyl donor, and of ornithine by transacetylation between N(2)-acetylornithine and glutamate. The chain is Arginine biosynthesis bifunctional protein ArgJ from Geobacillus kaustophilus (strain HTA426).